Reading from the N-terminus, the 203-residue chain is Guanylate kinase (203 aa).

The region spanning glycine 4–tryptophan 183 is the Guanylate kinase-like domain. Position 11–18 (alanine 11–threonine 18) interacts with ATP.

Belongs to the guanylate kinase family.

The protein resides in the cytoplasm. It catalyses the reaction GMP + ATP = GDP + ADP. In terms of biological role, essential for recycling GMP and indirectly, cGMP. The chain is Guanylate kinase from Desulfotalea psychrophila (strain LSv54 / DSM 12343).